A 337-amino-acid polypeptide reads, in one-letter code: Meiotic driver wtf4 (337 aa).

Residues 1–29 (MKNKDYPLRSSMDELSTKNDNEIDLEKGP) are compositionally biased toward basic and acidic residues. The disordered stretch occupies residues 1–40 (MKNKDYPLRSSMDELSTKNDNEIDLEKGPLPEYNSEDEST). The next 6 helical transmembrane spans lie at 89-109 (LLISVLAVIVVFFTAWVCVNP), 119-139 (AFFVTIGITCPILLITIFCFF), 149-169 (CIKVTVIFLAQCVKVTAVGLY), 176-196 (VVIIWLLWVVICYTLFLRSKF), 210-230 (CSISAALLLFLLYVRLPFWTL), and 234-254 (FSGLFQVLGVQSCVVIVTKGL).

Belongs to the WTF family. Homomer. Forms protein aggregates. The two isoforms can interact with each other and with themselves. High sequence similarity is required for their interaction.

It is found in the spore membrane. The protein resides in the vacuole membrane. The protein localises to the ascus epiplasm. It localises to the cytoplasm. Its subcellular location is the endoplasmic reticulum membrane. Functionally, promotes unequal transmission of alleles from the parental zygote to progeny spores by acting as poison/antidote system where the poison and antidote proteins are produced from the same locus; the poison component is trans-acting and targets all spores within an ascus whereas the antidote component is spore-specific, leading to poisoning of all progeny that do not inherit the allele. In terms of biological role, localizes isoform 2 to the vacuole thereby facilitating its degradation. Its function is as follows. Forms toxic aggregates that disrupt spore maturation. The protein is Meiotic driver wtf4 of Schizosaccharomyces kambucha (Fission yeast).